The primary structure comprises 140 residues: Histone H2B.1, sperm (140 aa).

A disordered region spans residues 1–47 (MPSQRSPTKRSPTKRSPQKGAGKGGKGSKRGGKARRRGGAAVRRRRR). 3 short sequence motifs (SPKK motif) span residues 6 to 9 (SPTK), 11 to 14 (SPTK), and 16 to 19 (SPQK). 2 stretches are compositionally biased toward basic residues: residues 7 to 17 (PTKRSPTKRSP) and 26 to 47 (KGSK…RRRR). Phosphoserine is present on residues serine 11 and serine 16. Residue serine 127 is glycosylated (O-linked (GlcNAc) serine). Lysine 135 participates in a covalent cross-link: Glycyl lysine isopeptide (Lys-Gly) (interchain with G-Cter in ubiquitin).

Belongs to the histone H2B family. The nucleosome is a histone octamer containing two molecules each of H2A, H2B, H3 and H4 assembled in one H3-H4 heterotetramer and two H2A-H2B heterodimers. The octamer wraps approximately 147 bp of DNA. Post-translationally, monoubiquitination of Lys-135 gives a specific tag for epigenetic transcriptional activation and is also prerequisite for histone H3 'Lys-4' and 'Lys-79' methylation. Phosphorylated on SPKK motifs 2 and 3; which may regulate DNA binding. Dephosphorylated during maturation of spermatids to mature sperm and rephosphorylated at fertilization. In terms of processing, glcNAcylation at Ser-127 promotes monoubiquitination of Lys-135. It fluctuates in response to extracellular glucose, and associates with transcribed genes.

The protein resides in the nucleus. It localises to the chromosome. In terms of biological role, core component of nucleosome. Nucleosomes wrap and compact DNA into chromatin, limiting DNA accessibility to the cellular machineries which require DNA as a template. Histones thereby play a central role in transcription regulation, DNA repair, DNA replication and chromosomal stability. DNA accessibility is regulated via a complex set of post-translational modifications of histones, also called histone code, and nucleosome remodeling. This chain is Histone H2B.1, sperm, found in Strongylocentrotus purpuratus (Purple sea urchin).